The chain runs to 112 residues: Large ribosomal subunit protein uL22 (112 aa).

It belongs to the universal ribosomal protein uL22 family. As to quaternary structure, part of the 50S ribosomal subunit.

Its function is as follows. This protein binds specifically to 23S rRNA; its binding is stimulated by other ribosomal proteins, e.g. L4, L17, and L20. It is important during the early stages of 50S assembly. It makes multiple contacts with different domains of the 23S rRNA in the assembled 50S subunit and ribosome. Functionally, the globular domain of the protein is located near the polypeptide exit tunnel on the outside of the subunit, while an extended beta-hairpin is found that lines the wall of the exit tunnel in the center of the 70S ribosome. This is Large ribosomal subunit protein uL22 from Sorangium cellulosum (strain So ce56) (Polyangium cellulosum (strain So ce56)).